Consider the following 344-residue polypeptide: uncharacterized protein (344 aa).

Residues 95–344 (TINPEDANED…TPAKKNSKGR (250 aa)) form a disordered region. A compositionally biased stretch (basic and acidic residues) spans 103-123 (EDAKVKNSLKLEKEEGSDEKS). Acidic residues predominate over residues 135-155 (SDDESDNSNDSEESEAEDSDQ). Positions 191–200 (SAKNAKASKP) are enriched in low complexity. Residues 244–259 (SEDEDSGSDNSEEESE) are compositionally biased toward acidic residues. A compositionally biased stretch (basic residues) spans 265-276 (ASSKKPPSKSSK). Positions 281 to 314 (EDEDEDSGQSESEHSEEESNSDEDSGQSEEESEE) are enriched in acidic residues. Basic residues predominate over residues 331–344 (TAKKTPAKKNSKGR).

This is an uncharacterized protein from Acanthamoeba polyphaga (Amoeba).